Reading from the N-terminus, the 418-residue chain is Ciliary microtubule-associated protein 2 (418 aa).

As to expression, sperm.

In Homo sapiens (Human), this protein is Ciliary microtubule-associated protein 2.